We begin with the raw amino-acid sequence, 113 residues long: Endoribonuclease SymE (113 aa).

Positions 29-74 constitute a SpoVT-AbrB domain; the sequence is SRYPDYSRIPAITLKGQWLEAAGFATGTAIDVKVMEGCIVLTAQPP.

This sequence belongs to the SymE family.

The protein resides in the cytoplasm. Functionally, involved in the degradation and recycling of damaged RNA. It is itself a target for degradation by the ATP-dependent protease Lon. This Escherichia coli O1:K1 / APEC protein is Endoribonuclease SymE.